We begin with the raw amino-acid sequence, 61 residues long: Large ribosomal subunit protein uL30 (61 aa).

Belongs to the universal ribosomal protein uL30 family. Part of the 50S ribosomal subunit.

In Treponema pallidum subsp. pallidum (strain SS14), this protein is Large ribosomal subunit protein uL30.